The primary structure comprises 543 residues: Fiber protein (543 aa).

The segment at 1 to 36 (MKRTRSALPANFDPVYPYDAPKPSTQPPFFNDRKGL) is disordered.

It belongs to the adenoviridae fiber family. In terms of assembly, homotrimer. Interacts (via N-terminal tail region) with pentons.

Its subcellular location is the virion. The protein resides in the host nucleus. Forms spikes that protrude from each vertex of the icosahedral capsid. Interacts with host receptor to provide virion initial attachment to target cell. Fiber proteins are shed during virus entry, when virus is still at the cell surface. The sequence is that of Fiber protein from Canine adenovirus serotype 1 (strain RI261) (CAdV-1).